The following is a 259-amino-acid chain: Deoxyribose-phosphate aldolase (259 aa).

D101 (proton donor/acceptor) is an active-site residue. K166 serves as the catalytic Schiff-base intermediate with acetaldehyde. K200 (proton donor/acceptor) is an active-site residue.

This sequence belongs to the DeoC/FbaB aldolase family. DeoC type 2 subfamily.

It localises to the cytoplasm. The enzyme catalyses 2-deoxy-D-ribose 5-phosphate = D-glyceraldehyde 3-phosphate + acetaldehyde. It functions in the pathway carbohydrate degradation; 2-deoxy-D-ribose 1-phosphate degradation; D-glyceraldehyde 3-phosphate and acetaldehyde from 2-deoxy-alpha-D-ribose 1-phosphate: step 2/2. Functionally, catalyzes a reversible aldol reaction between acetaldehyde and D-glyceraldehyde 3-phosphate to generate 2-deoxy-D-ribose 5-phosphate. The protein is Deoxyribose-phosphate aldolase of Glaesserella parasuis serovar 5 (strain SH0165) (Haemophilus parasuis).